The chain runs to 388 residues: MSELVNTSEVATVAVPNKNGKINLLDLNRQQMREFFLEMGEKPFRADQVMKWMYHYCSDNFDDMTDINKVLRNKLKDVAEIRAPEVVEEQRSADGTIKWAIAVGDQRVETVYIPEEDRATLCVSSQVGCALECKFCSTAQQGFNRNLRVSEIIGQVWRAAKIVGAAKVTGTRPITNVVMMGMGEPLLNLTNVVPAMEIMLDDFGFGLSKRRVTLSTSGVVPALDKLGDMIDVALAISLHAPNDEIRDEIVPVNKKYNIETFLAAVRRYLAKSNANQGRVTIEYVMLDHVNDETDHAHQLAELLKDTPCKINLIPWNPFPGAPYGRSSNSRIDRFSKVLMDYGFTTIVRKTRGDDIDAACGQLAGDVIDRTKRTLRKRMQGETIDVKAV.

The Proton acceptor role is filled by Glu-109. The Radical SAM core domain occupies Glu-115–Asp-354. Cys-122 and Cys-359 form a disulfide bridge. Residues Cys-129, Cys-133, and Cys-136 each contribute to the [4Fe-4S] cluster site. Residues Gly-183 to Glu-184, Ser-215, Ser-237 to His-239, and Asn-316 each bind S-adenosyl-L-methionine. The S-methylcysteine intermediate role is filled by Cys-359.

Belongs to the radical SAM superfamily. RlmN family. The cofactor is [4Fe-4S] cluster.

It localises to the cytoplasm. It carries out the reaction adenosine(2503) in 23S rRNA + 2 reduced [2Fe-2S]-[ferredoxin] + 2 S-adenosyl-L-methionine = 2-methyladenosine(2503) in 23S rRNA + 5'-deoxyadenosine + L-methionine + 2 oxidized [2Fe-2S]-[ferredoxin] + S-adenosyl-L-homocysteine. The catalysed reaction is adenosine(37) in tRNA + 2 reduced [2Fe-2S]-[ferredoxin] + 2 S-adenosyl-L-methionine = 2-methyladenosine(37) in tRNA + 5'-deoxyadenosine + L-methionine + 2 oxidized [2Fe-2S]-[ferredoxin] + S-adenosyl-L-homocysteine. In terms of biological role, specifically methylates position 2 of adenine 2503 in 23S rRNA and position 2 of adenine 37 in tRNAs. m2A2503 modification seems to play a crucial role in the proofreading step occurring at the peptidyl transferase center and thus would serve to optimize ribosomal fidelity. This chain is Dual-specificity RNA methyltransferase RlmN, found in Enterobacter sp. (strain 638).